An 81-amino-acid chain; its full sequence is Photosystem I iron-sulfur center (81 aa).

4Fe-4S ferredoxin-type domains are found at residues 2-31 and 39-68; these read VHVV…MVPW and IASS…IRVY. [4Fe-4S] cluster contacts are provided by cysteine 11, cysteine 14, cysteine 17, cysteine 21, cysteine 48, cysteine 51, cysteine 54, and cysteine 58.

As to quaternary structure, the eukaryotic PSI reaction center is composed of at least 11 subunits. [4Fe-4S] cluster serves as cofactor.

The protein resides in the plastid. It is found in the chloroplast thylakoid membrane. It catalyses the reaction reduced [plastocyanin] + hnu + oxidized [2Fe-2S]-[ferredoxin] = oxidized [plastocyanin] + reduced [2Fe-2S]-[ferredoxin]. Functionally, apoprotein for the two 4Fe-4S centers FA and FB of photosystem I (PSI); essential for photochemical activity. FB is the terminal electron acceptor of PSI, donating electrons to ferredoxin. The C-terminus interacts with PsaA/B/D and helps assemble the protein into the PSI complex. Required for binding of PsaD and PsaE to PSI. PSI is a plastocyanin/cytochrome c6-ferredoxin oxidoreductase, converting photonic excitation into a charge separation, which transfers an electron from the donor P700 chlorophyll pair to the spectroscopically characterized acceptors A0, A1, FX, FA and FB in turn. The sequence is that of Photosystem I iron-sulfur center from Cyanidium caldarium (Red alga).